A 169-amino-acid polypeptide reads, in one-letter code: Thaumatin-like pathogenesis-related protein 4 (169 aa).

The first 21 residues, 1 to 21 (MATSSTVLFLLLAVFAASASA), serve as a signal peptide directing secretion.

It belongs to the thaumatin family.

In terms of biological role, associated with resistance against stem rust fungi. The polypeptide is Thaumatin-like pathogenesis-related protein 4 (RASTL-4) (Avena sativa (Oat)).